The following is an 81-amino-acid chain: Photosystem I iron-sulfur center (81 aa).

4Fe-4S ferredoxin-type domains are found at residues 2-31 and 39-68; these read SHSV…MIPW and IASA…VRVS. Positions 11, 14, 17, 21, 48, 51, 54, and 58 each coordinate [4Fe-4S] cluster.

The eukaryotic PSI reaction center is composed of at least 11 subunits. The cofactor is [4Fe-4S] cluster.

It localises to the plastid. It is found in the chloroplast thylakoid membrane. The catalysed reaction is reduced [plastocyanin] + hnu + oxidized [2Fe-2S]-[ferredoxin] = oxidized [plastocyanin] + reduced [2Fe-2S]-[ferredoxin]. Its function is as follows. Apoprotein for the two 4Fe-4S centers FA and FB of photosystem I (PSI); essential for photochemical activity. FB is the terminal electron acceptor of PSI, donating electrons to ferredoxin. The C-terminus interacts with PsaA/B/D and helps assemble the protein into the PSI complex. Required for binding of PsaD and PsaE to PSI. PSI is a plastocyanin-ferredoxin oxidoreductase, converting photonic excitation into a charge separation, which transfers an electron from the donor P700 chlorophyll pair to the spectroscopically characterized acceptors A0, A1, FX, FA and FB in turn. The polypeptide is Photosystem I iron-sulfur center (Daucus carota (Wild carrot)).